We begin with the raw amino-acid sequence, 502 residues long: UDP-N-acetylmuramate--L-alanine ligase (502 aa).

Residue 120 to 126 participates in ATP binding; sequence GTHGKTS.

Belongs to the MurCDEF family.

Its subcellular location is the cytoplasm. It carries out the reaction UDP-N-acetyl-alpha-D-muramate + L-alanine + ATP = UDP-N-acetyl-alpha-D-muramoyl-L-alanine + ADP + phosphate + H(+). Its pathway is cell wall biogenesis; peptidoglycan biosynthesis. In terms of biological role, cell wall formation. In Rhodococcus erythropolis (strain PR4 / NBRC 100887), this protein is UDP-N-acetylmuramate--L-alanine ligase.